Consider the following 422-residue polypeptide: 5-hydroxytryptamine receptor 1A (422 aa).

Topologically, residues 1–38 are extracellular; the sequence is MDVLGPGQGNNTTSSEGPFGTRANATGISDVTFSYQVI. Residues Asn10, Asn11, and Asn24 are each glycosylated (N-linked (GlcNAc...) asparagine). Residues 39–59 form a helical membrane-spanning segment; it reads TSLLLGTLIFCAVLGNACVVA. Residues 60–73 lie on the Cytoplasmic side of the membrane; that stretch reads AIALERSLQNVANY. The chain crosses the membrane as a helical span at residues 74-98; sequence LIGSLAVTDLMVSVLVLPMAALYQV. Residues 99–107 are Extracellular-facing; sequence LNKWTLGQV. Residues 108 to 132 form a helical membrane-spanning segment; it reads TCDLFIALDVLCCTSSILHLCAIAL. An intrachain disulfide couples Cys109 to Cys187. Serotonin contacts are provided by Asp116 and Cys120. The DRY motif; important for ligand-induced conformation changes signature appears at 133 to 135; the sequence is DRY. Residues 133–152 lie on the Cytoplasmic side of the membrane; sequence DRYWAITDPIDYVNKRTPRR. Residues 153-174 traverse the membrane as a helical segment; it reads AAALISLTWLVGFLISIPPMLG. The Extracellular segment spans residues 175–193; that stretch reads WRTPEDRSDPDACTISKDH. A helical membrane pass occupies residues 194 to 216; that stretch reads GYTIYSTFGAFYIPLLLMLVLYG. Residues 217–346 lie on the Cytoplasmic side of the membrane; the sequence is RIFRAARFRI…LARERKTVKT (130 aa). Positions 237 to 262 are disordered; it reads GADSRLGASPAPQRKKSANGELGSRE. Lys345, Thr346, and Gly352 together coordinate 1D-myo-inositol 4-phosphate. The chain crosses the membrane as a helical span at residues 347 to 370; sequence LGIIMGTFILCWLPFFIVALVLPF. The Extracellular segment spans residues 371 to 378; that stretch reads CESSCHMP. Residues 379–403 form a helical membrane-spanning segment; it reads TLLGAIINWLGYSNSLLNPVIYAYF. An NPxxY motif; important for ligand-induced conformation changes and signaling motif is present at residues 396–400; it reads NPVIY. 1D-myo-inositol 4-phosphate is bound by residues Phe403, Asn404, and Lys405. Residues 404-422 lie on the Cytoplasmic side of the membrane; it reads NKDFQNAFKKILKCKFCRR.

The protein belongs to the G-protein coupled receptor 1 family. 5-hydroxytryptamine receptor subfamily. HTR1A sub-subfamily. Heterodimer; heterodimerizes with GPER1. Interacts with YIF1B. Interacts with GPR39 and GALR1.

The protein resides in the cell membrane. The protein localises to the cell projection. Its subcellular location is the dendrite. With respect to regulation, G-protein coupled receptor activity is regulated by lipids: phosphatidylinositol 4-phosphate increases HTR1A-mediated activity. Its function is as follows. G-protein coupled receptor for 5-hydroxytryptamine (serotonin). Also functions as a receptor for various drugs and psychoactive substances. Ligand binding causes a conformation change that triggers signaling via guanine nucleotide-binding proteins (G proteins) and modulates the activity of downstream effectors, such as adenylate cyclase. HTR1A is coupled to G(i)/G(o) G alpha proteins and mediates inhibitory neurotransmission: signaling inhibits adenylate cyclase activity and activates a phosphatidylinositol-calcium second messenger system that regulates the release of Ca(2+) ions from intracellular stores. Beta-arrestin family members regulate signaling by mediating both receptor desensitization and resensitization processes. This is 5-hydroxytryptamine receptor 1A (HTR1A) from Equus caballus (Horse).